Here is a 528-residue protein sequence, read N- to C-terminus: J domain-containing protein APJ1 (528 aa).

Positions 4-73 constitute a J domain; sequence NTSLYDSLNV…RALYDQYGTT (70 aa). The segment at 193-274 adopts a CR-type zinc-finger fold; that stretch reads GKTAKLGLNR…CQGLGFIKER (82 aa). CXXCXGXG motif repeat units follow at residues 206 to 213, 218 to 225, 246 to 253, and 262 to 269; these read CSVCDGHG, CTCKTCKG, CADCGGAG, and CQQCQGLG. The segment covering 485–499 has biased composition (basic and acidic residues); it reads NERDSRKRNNRRFDE. Residues 485 to 528 are disordered; it reads NERDSRKRNNRRFDESNINNNNETKRNKYSSPVSGFYDHDINGY.

It localises to the cytoplasm. The protein resides in the nucleus. Its function is as follows. Putative chaperone involved in protein folding. Interferes with propagation of [PSI+] prion when overproduced. In Saccharomyces cerevisiae (strain ATCC 204508 / S288c) (Baker's yeast), this protein is J domain-containing protein APJ1 (APJ1).